Reading from the N-terminus, the 342-residue chain is Ferredoxin--NADP reductase (342 aa).

FAD is bound by residues Cys-17, Asp-36, Gln-44, Tyr-49, Val-89, Phe-124, Asp-289, and Thr-330.

The protein belongs to the ferredoxin--NADP reductase type 2 family. Homodimer. FAD is required as a cofactor.

The catalysed reaction is 2 reduced [2Fe-2S]-[ferredoxin] + NADP(+) + H(+) = 2 oxidized [2Fe-2S]-[ferredoxin] + NADPH. This Bradyrhizobium diazoefficiens (strain JCM 10833 / BCRC 13528 / IAM 13628 / NBRC 14792 / USDA 110) protein is Ferredoxin--NADP reductase.